The primary structure comprises 804 residues: Cell surface sensor MSB2 (804 aa).

An N-terminal signal peptide occupies residues 1–20 (MHNFSKLAVAFVAAASFASA). Residues 21-694 (EPETKAKVER…TNQSATQRGT (674 aa)) are Extracellular-facing. N-linked (GlcNAc...) asparagine glycosylation is present at Asn-45. 2 stretches are compositionally biased toward low complexity: residues 46–58 (TTTP…SSTS) and 69–80 (SSFSSSASSSSA). Disordered stretches follow at residues 46–90 (TTTP…RQPT) and 105–220 (TDST…ATSN). The segment at 46 to 475 (TTTPASEASS…SVAPTSATSS (430 aa)) is serine/threonine rich region (STR). Polar residues-rich tracts occupy residues 81 to 90 (QELTASRQPT) and 109 to 126 (PFSQ…SATG). 2 stretches are compositionally biased toward low complexity: residues 128-143 (VTPI…PSTA) and 150-169 (SALT…SVTS). An N-linked (GlcNAc...) asparagine glycan is attached at Asn-157. The segment covering 170-188 (PGSTSGPAGTPESSSASDF) has biased composition (polar residues). Residues 189–202 (TSAVATSRASTATS) are compositionally biased toward low complexity. N-linked (GlcNAc...) asparagine glycans are attached at residues Asn-298, Asn-308, Asn-357, and Asn-393. A compositionally biased stretch (polar residues) spans 345 to 394 (VQTLPPVSTPTANGTVTSPPVDSQTTVLPTTTPGLSSDTIVTSPGVTANS). A disordered region spans residues 345–516 (VQTLPPVSTP…APTVLPSDLP (172 aa)). 2 stretches are compositionally biased toward low complexity: residues 395 to 407 (TQVP…TIPT) and 427 to 476 (NNTV…TSSA). N-linked (GlcNAc...) asparagine glycosylation is found at Asn-427 and Asn-433. The tract at residues 482–641 (WLPTTIIVQA…NGMLAHNLTM (160 aa)) is HKR11-MSB2 homology domain (HMH). Polar residues predominate over residues 493-508 (LPSTTGSSTNAPSSAP). N-linked (GlcNAc...) asparagine glycans are attached at residues Asn-629, Asn-638, Asn-669, Asn-683, and Asn-686. Residues 658 to 689 (KPAGAGSGTGGNGSNGPNDVFNNDNNSTNQSA) are disordered. Gly residues predominate over residues 660–671 (AGAGSGTGGNGS). Low complexity predominate over residues 672-686 (NGPNDVFNNDNNSTN). A helical transmembrane segment spans residues 695-715 (VAGIAFGAVSLAAAYGAAMFI). The Cytoplasmic segment spans residues 716–804 (VARRYKKKRQ…VAQENSLGWN (89 aa)). Disordered regions lie at residues 724 to 748 (RQAH…PALM) and 762 to 804 (GVMG…LGWN). A compositionally biased stretch (polar residues) spans 731–744 (SSVATPSEMRQSGS). A compositionally biased stretch (low complexity) spans 774–787 (GSNGSGRSAGNSAR).

Belongs to the HKR1/MSB2 family.

Its subcellular location is the cell membrane. It is found in the vacuole membrane. Functionally, MSB2 and SHO1 have overlapping functions in recognizing various surface signals for MAPK PMK1 activation and appressorium formation. While MSB2 is critical for sensing surface hydrophobicity and cutin monomers, SHO1 may play a more important role in recognizing rice leaf waxes. The polypeptide is Cell surface sensor MSB2 (Pyricularia oryzae (strain 70-15 / ATCC MYA-4617 / FGSC 8958) (Rice blast fungus)).